The sequence spans 763 residues: Actin filament-associated protein 1-like 1 (763 aa).

The disordered stretch occupies residues 83–137 (LQDMPEDEAESCKAASPEPAKSPSLRHTADLPPPLPNRPPPEDYYEEALPLGPGK). A phosphoserine mark is found at S98, S104, and S153. Residues 169–210 (TRMNGELKNSYNDSDAMSSSYESYDEEEEEGKGPQPTHQWPS) are disordered. Positions 175 to 185 (LKNSYNDSDAM) are enriched in polar residues. The region spanning 220–316 (DCRICAFLLR…WLKVIREVSK (97 aa)) is the PH 1 domain. Phosphoserine is present on residues S329 and S343. A disordered region spans residues 343 to 380 (SQEKQTSDSDSLGMGDSCSTLGREHGKGKKSSLSELKG). In terms of domain architecture, PH 2 spans 413 to 507 (EVPCCGYLNV…WLGLLLVEMG (95 aa)). Y552 is modified (phosphotyrosine). Residues 561-604 (QDEEPERPPGAQVKRHASTCSEKSHRVDPQVKVKRHASSAHQYK) form a disordered region. Residues 582–591 (EKSHRVDPQV) show a composition bias toward basic and acidic residues. Positions 606 to 694 (GKNRAEEDAR…LVTVKERLQQ (89 aa)) form a coiled coil. Positions 712–724 (SGETANKPQNNVP) are enriched in polar residues. The interval 712-763 (SGETANKPQNNVPEQPLPVNCVSELRKRSPSIINSNQGRVLQKAKEWEMKKT) is disordered. A Phosphoserine modification is found at S742. Positions 754–763 (KAKEWEMKKT) are enriched in basic and acidic residues.

Interacts with CTTN.

The protein localises to the cytoplasm. It is found in the cell projection. The protein resides in the podosome. It localises to the invadopodium. Its subcellular location is the cytoskeleton. The protein localises to the stress fiber. May be involved in podosome and invadosome formation. The sequence is that of Actin filament-associated protein 1-like 1 (AFAP1L1) from Bos taurus (Bovine).